Consider the following 631-residue polypeptide: Phosphomethylpyrimidine synthase (631 aa).

Residues Asn239, Met268, Tyr297, His333, 353–355, 394–397, and Glu433 each bind substrate; these read SRG and DGLR. Residue His437 coordinates Zn(2+). Tyr460 contacts substrate. Position 501 (His501) interacts with Zn(2+). [4Fe-4S] cluster is bound by residues Cys581, Cys584, and Cys589.

This sequence belongs to the ThiC family. In terms of assembly, homodimer. [4Fe-4S] cluster is required as a cofactor.

The enzyme catalyses 5-amino-1-(5-phospho-beta-D-ribosyl)imidazole + S-adenosyl-L-methionine = 4-amino-2-methyl-5-(phosphooxymethyl)pyrimidine + CO + 5'-deoxyadenosine + formate + L-methionine + 3 H(+). Its pathway is cofactor biosynthesis; thiamine diphosphate biosynthesis. Functionally, catalyzes the synthesis of the hydroxymethylpyrimidine phosphate (HMP-P) moiety of thiamine from aminoimidazole ribotide (AIR) in a radical S-adenosyl-L-methionine (SAM)-dependent reaction. This is Phosphomethylpyrimidine synthase from Salmonella enteritidis PT4 (strain P125109).